The chain runs to 373 residues: 3-isopropylmalate dehydrogenase gloI (373 aa).

Substrate is bound by residues serine 92, arginine 98, and arginine 108. Residues aspartate 228, aspartate 253, and aspartate 257 each contribute to the Mg(2+) site. Residues 294-300 and asparagine 307 contribute to the NADP(+) site; that span reads HGSAPDI.

This sequence belongs to the isocitrate and isopropylmalate dehydrogenases family. As to quaternary structure, homodimer. Requires Mg(2+) as cofactor. The cofactor is Mn(2+).

It catalyses the reaction (2R,3S)-3-isopropylmalate + NAD(+) = 4-methyl-2-oxopentanoate + CO2 + NADH. It functions in the pathway mycotoxin biosynthesis. In terms of biological role, 3-isopropylmalate dehydrogenase; part of the gene cluster that mediates the biosynthesis of pneumocandins, lipohexapeptides of the echinocandin family that prevent fungal cell wall formation by non-competitive inhibition of beta-1,3-glucan synthase. The 10,12-dimethylmyristoyl side chain is synthesized by the reducing polyketide synthase gloL/GLPKS4. The thioesterase gloN/GLHYD exclusively interacts with gloL/GLPKS4 to maintain turnover of the polyketide side chain. The 10R,12S-dimethylmyristic acid is then transferred to the first thiolation domain of the nonribosomal peptide synthetase gloA/GLNRPS4 by the acyl-AMP ligase gloD/GLligase, followed by its acylation to L-ornithine to trigger elongation of the cyclic hexapeptide. L-ornithine, 4R-hydroxyl-L-proline (generated from L-proline by the dioxygenase gloF/GLOXY2), 3S-hydroxyl-L-homotyrosine (generated by gloG/GLHtyB, gloH/GLHtyA, gloI/GLHtyC, gloJ/GLHtyD and hydroxylated at C-3 by the dioxygenase gloM/GLOXY1), 3R-hydroxyl-L-glutamine (generated from L-glutamine probably by the dioxygenase gloE/GLOXY3) and 3S-hydroxyl-L-proline (generated from L-proline by the dioxygenase gloF/GLOXY2 to yield pneumocandin B0), or 3S-hydroxyl-4S-methyl-L-proline (generated from L-leucine by the dioxygenase gloC/GLOXY4 to yield pneumocandin A0) are sequentially added to the growing chain. The last C domain of gloA/GLNRPS4 is proposed to be responsible for cyclization by condensation to form the peptide bond between L-ornithine and 3S-hydroxyl-4S-methyl-L-proline (for pneumocandin A0) or 3S-hydroxyl-L-proline (for pneumocandin B0). Finally, the subsequent C-4 hydroxylation of 3S-hydroxyl-L-homotyrosine and L-ornithine dihydroxylation at C-4 and C-5 are performed by the cytochrome P450 monooxygenases gloP/GLP450-1 and gloO/GLP450-2, respectively. In Glarea lozoyensis (strain ATCC 20868 / MF5171), this protein is 3-isopropylmalate dehydrogenase gloI.